Consider the following 350-residue polypeptide: C4-dicarboxylate-binding protein DctB (350 aa).

Positions 1–18 (MKSLLACLALMIAGIATA) are cleaved as a signal peptide.

Belongs to the bacterial solute-binding protein 7 family.

It is found in the secreted. Part of the binding-protein-dependent transport system for uptake of C4-dicarboxylates. Responsible for growth on fumarate and succinate but not malate. Is not directly involved in C4-dicarboxylate uptake, but plays a sensory role in the DctS/DctR two-component system which regulates the expression of the dctA C4-dicarboxylate transporter. The polypeptide is C4-dicarboxylate-binding protein DctB (dctB) (Bacillus subtilis (strain 168)).